The following is a 181-amino-acid chain: Mating-type M-specific polypeptide Mc (181 aa).

A DNA-binding region (HMG box) is located at residues threonine 103 to lysine 171.

The protein localises to the nucleus. Its subcellular location is the cytoplasm. It is found in the cytoskeleton. The protein resides in the microtubule organizing center. It localises to the spindle pole body. In terms of biological role, mating type proteins are sequence specific DNA-binding proteins that act as master switches in yeast differentiation by controlling gene expression in a cell type-specific fashion. Positive regulator of MFM genes. The HMG box recognizes the DNA sequence 5'-AACAAAG-3'. Required for conjugation and efficient meiosis. The protein is Mating-type M-specific polypeptide Mc (mat3-Mc) of Schizosaccharomyces pombe (Fission yeast).